We begin with the raw amino-acid sequence, 393 residues long: Dual specificity mitogen-activated protein kinase kinase 1 (393 aa).

Residues 1–27 are disordered; it reads MPKKKPTPIQLNPAPDGSAVNGTSSAE. One can recognise a Protein kinase domain in the interval 68-361; sequence FEKISELGAG…LKQLMVHAFI (294 aa). ATP-binding positions include 74 to 82, Lys-97, 143 to 146, and 150 to 153; these read LGAGNGGVV, MEHM, and SLDQ. Residue Lys-97 coordinates U0126. 144-146 serves as a coordination point for K-252a; the sequence is EHM. Asp-190 functions as the Proton acceptor in the catalytic mechanism. ATP contacts are provided by residues 192–195 and Asp-208; that span reads KPSN. Ser-194 is a binding site for K-252a. 208–211 is a U0126 binding site; sequence DFGV. 2 positions are modified to phosphoserine; by BRAF and RAF1: Ser-218 and Ser-222. The tract at residues 270–307 is RAF1-binding; it reads ELELMFGCQVEGDAAETPPRPRTPGRPLSSYGMDSRPP. The residue at position 286 (Thr-286) is a Phosphothreonine. Residue Thr-292 is modified to Phosphothreonine; by MAPK1. Ser-298 bears the Phosphoserine; by PAK mark.

The protein belongs to the protein kinase superfamily. STE Ser/Thr protein kinase family. MAP kinase kinase subfamily. Found in a complex with at least BRAF, HRAS, MAP2K1, MAPK3/ERK1 and RGS14. Forms a heterodimer with MAP2K2/MEK2. Forms heterodimers with KSR2 which further dimerize to form tetramers. Interacts with KSR1 or KSR2 and BRAF; the interaction with KSR1 or KSR2 mediates KSR1-BRAF or KSR2-BRAF dimerization. Interacts with ARBB2, LAMTOR3 and RAF1. Interacts with MAPK1/ERK2. Interacts with MORG1. Interacts with PPARG. Interacts with isoform 1 of VRK2. Interacts with SGK1. Interacts with BIRC6/bruce. Interacts with KAT7; the interaction promotes KAT7 phosphorylation. Interacts with RAF1 and NEK10; the interaction is required for ERK1/2-signaling pathway activation in response to UV irradiation. Interacts with TRAF3IP3. Interacts with MOS. In terms of assembly, (Microbial infection) Interacts with Yersinia YopJ. Phosphorylation at Ser-218 and Ser-222 by MAP kinase kinase kinases (BRAF or MEKK1) positively regulates kinase activity. Also phosphorylated at Thr-292 by MAPK1/ERK2 and at Ser-298 by PAK. MAPK1/ERK2 phosphorylation of Thr-292 occurs in response to cellular adhesion and leads to inhibition of Ser-298 phosphorylation by PAK. Autophosphorylated at Ser-218 and Ser-222, autophosphosphorylation is promoted by NEK10 following UV irradiation. Post-translationally, (Microbial infection) Acetylation by Yersinia YopJ prevents phosphorylation and activation, thus blocking the MAPK signaling pathway. As to expression, widely expressed, with extremely low levels in brain.

The protein resides in the cytoplasm. It is found in the cytoskeleton. The protein localises to the microtubule organizing center. It localises to the centrosome. Its subcellular location is the spindle pole body. The protein resides in the nucleus. It is found in the membrane. The catalysed reaction is L-seryl-[protein] + ATP = O-phospho-L-seryl-[protein] + ADP + H(+). The enzyme catalyses L-threonyl-[protein] + ATP = O-phospho-L-threonyl-[protein] + ADP + H(+). It carries out the reaction L-tyrosyl-[protein] + ATP = O-phospho-L-tyrosyl-[protein] + ADP + H(+). Its activity is regulated as follows. Ras proteins such as HRAS mediate the activation of RAF proteins such as RAF1 or BRAF which in turn activate extracellular signal-regulated kinases (ERK) through MAPK (mitogen-activated protein kinases) and ERK kinases MAP2K1/MEK1 and MAP2K2/MEK2. Activation occurs through phosphorylation of Ser-218 and Ser-222. MAP2K1/MEK1 binds KSR1 or KSR2 releasing the inhibitory intramolecular interaction between KSR1 or KSR2 protein kinase and N-terminal domains. This allows KSR1 or KSR2 dimerization with BRAF leading to BRAF activation and phosphorylation of MAP2K1. MAP2K1/MEK1 is also the target of negative feed-back regulation by its substrate kinases, such as MAPK1/ERK2. These phosphorylate MAP2K1/MEK1 on Thr-292, thereby facilitating dephosphorylation of the activating residues Ser-218 and Ser-222. Inhibited by serine/threonine phosphatase 2A. Many inhibitors have been identified including pyrrole derivatives, TAK-733 (one of a series of 8-methylpyrido[2,3-d]pyrimidine-4,7(3H,8H)-dione derivatives), CH4987655 and RDEA119/BAY 869766. In terms of biological role, dual specificity protein kinase which acts as an essential component of the MAP kinase signal transduction pathway. Binding of extracellular ligands such as growth factors, cytokines and hormones to their cell-surface receptors activates RAS and this initiates RAF1 activation. RAF1 then further activates the dual-specificity protein kinases MAP2K1/MEK1 and MAP2K2/MEK2. Both MAP2K1/MEK1 and MAP2K2/MEK2 function specifically in the MAPK/ERK cascade, and catalyze the concomitant phosphorylation of a threonine and a tyrosine residue in a Thr-Glu-Tyr sequence located in the extracellular signal-regulated kinases MAPK3/ERK1 and MAPK1/ERK2, leading to their activation and further transduction of the signal within the MAPK/ERK cascade. Activates BRAF in a KSR1 or KSR2-dependent manner; by binding to KSR1 or KSR2 releases the inhibitory intramolecular interaction between KSR1 or KSR2 protein kinase and N-terminal domains which promotes KSR1 or KSR2-BRAF dimerization and BRAF activation. Depending on the cellular context, this pathway mediates diverse biological functions such as cell growth, adhesion, survival and differentiation, predominantly through the regulation of transcription, metabolism and cytoskeletal rearrangements. One target of the MAPK/ERK cascade is peroxisome proliferator-activated receptor gamma (PPARG), a nuclear receptor that promotes differentiation and apoptosis. MAP2K1/MEK1 has been shown to export PPARG from the nucleus. The MAPK/ERK cascade is also involved in the regulation of endosomal dynamics, including lysosome processing and endosome cycling through the perinuclear recycling compartment (PNRC), as well as in the fragmentation of the Golgi apparatus during mitosis. This chain is Dual specificity mitogen-activated protein kinase kinase 1, found in Homo sapiens (Human).